The sequence spans 252 residues: Probable transcriptional regulatory protein Fnod_1106 (252 aa).

This sequence belongs to the TACO1 family.

The protein resides in the cytoplasm. The chain is Probable transcriptional regulatory protein Fnod_1106 from Fervidobacterium nodosum (strain ATCC 35602 / DSM 5306 / Rt17-B1).